The primary structure comprises 144 residues: MATTLPVQRHPRSLFPEFSELFAAFPSFAGLRPTFDTRLMRLEDEMKEGRYEVRAELPGVDPDKDVDIMVRDGQLTIKAERTEQKDFDGRSEFAYGSFVRTVSLPVGADEDDIKATYDKGILTVSVAVSEGKPTEKHIQIRSTN.

A sHSP domain is found at Pro33–Thr143.

Belongs to the small heat shock protein (HSP20) family.

The protein localises to the secreted. The protein resides in the cell wall. It is found in the cytoplasm. Functionally, acts as a chaperone. This Mycobacterium bovis (strain ATCC BAA-935 / AF2122/97) protein is Alpha-crystallin (hspX).